A 310-amino-acid chain; its full sequence is GMP synthase [glutamine-hydrolyzing] subunit B (310 aa).

The GMPS ATP-PPase domain occupies M1–F187. S27–S33 contacts ATP.

In terms of assembly, heterodimer composed of a glutamine amidotransferase subunit (A) and a GMP-binding subunit (B).

The enzyme catalyses XMP + L-glutamine + ATP + H2O = GMP + L-glutamate + AMP + diphosphate + 2 H(+). The protein operates within purine metabolism; GMP biosynthesis; GMP from XMP (L-Gln route): step 1/1. Its function is as follows. Catalyzes the synthesis of GMP from XMP. The chain is GMP synthase [glutamine-hydrolyzing] subunit B (guaAB) from Thermoplasma volcanium (strain ATCC 51530 / DSM 4299 / JCM 9571 / NBRC 15438 / GSS1).